A 34-amino-acid polypeptide reads, in one-letter code: Corticostatin-6 (34 aa).

3 disulfide bridges follow: C3–C31, C5–C20, and C10–C30.

It belongs to the alpha-defensin family. Lung, spleen, small intestine, pituitary gland, adrenal medulla and plasma.

It localises to the secreted. Functionally, microbicidal activity and inhibits corticotropin (ACTH) stimulated corticosterone production. The chain is Corticostatin-6 from Oryctolagus cuniculus (Rabbit).